Reading from the N-terminus, the 509-residue chain is 2-isopropylmalate synthase (509 aa).

The region spanning 4–266 is the Pyruvate carboxyltransferase domain; that stretch reads VRIFDTTLRD…YTGIKTEEIY (263 aa). Residues D13, H201, H203, and N237 each coordinate Mn(2+). Positions 390-509 are regulatory domain; sequence TLDYFHISTG…FDYQAKGEKQ (120 aa).

This sequence belongs to the alpha-IPM synthase/homocitrate synthase family. LeuA type 1 subfamily. Homodimer. Mn(2+) serves as cofactor.

It is found in the cytoplasm. It catalyses the reaction 3-methyl-2-oxobutanoate + acetyl-CoA + H2O = (2S)-2-isopropylmalate + CoA + H(+). Its pathway is amino-acid biosynthesis; L-leucine biosynthesis; L-leucine from 3-methyl-2-oxobutanoate: step 1/4. Its function is as follows. Catalyzes the condensation of the acetyl group of acetyl-CoA with 3-methyl-2-oxobutanoate (2-ketoisovalerate) to form 3-carboxy-3-hydroxy-4-methylpentanoate (2-isopropylmalate). This chain is 2-isopropylmalate synthase, found in Carboxydothermus hydrogenoformans (strain ATCC BAA-161 / DSM 6008 / Z-2901).